A 251-amino-acid chain; its full sequence is Hydroxyacylglutathione hydrolase (251 aa).

Zn(2+) contacts are provided by His53, His55, Asp57, His58, His110, Asp127, and His165.

It belongs to the metallo-beta-lactamase superfamily. Glyoxalase II family. As to quaternary structure, monomer. It depends on Zn(2+) as a cofactor.

It catalyses the reaction an S-(2-hydroxyacyl)glutathione + H2O = a 2-hydroxy carboxylate + glutathione + H(+). The protein operates within secondary metabolite metabolism; methylglyoxal degradation; (R)-lactate from methylglyoxal: step 2/2. Functionally, thiolesterase that catalyzes the hydrolysis of S-D-lactoyl-glutathione to form glutathione and D-lactic acid. The polypeptide is Hydroxyacylglutathione hydrolase (Cronobacter sakazakii (strain ATCC BAA-894) (Enterobacter sakazakii)).